A 327-amino-acid chain; its full sequence is Ornithine carbamoyltransferase 2, anabolic (327 aa).

Residues Arg-109 and 136–139 (HPTQ) contribute to the carbamoyl phosphate site. Residues Asn-168, Asp-232, and 236-237 (SM) each bind L-ornithine. Carbamoyl phosphate is bound by residues 273 to 274 (CL) and Arg-313.

Belongs to the aspartate/ornithine carbamoyltransferase superfamily. OTCase family. In terms of assembly, homotrimer.

The protein localises to the cytoplasm. It carries out the reaction carbamoyl phosphate + L-ornithine = L-citrulline + phosphate + H(+). It functions in the pathway amino-acid biosynthesis; L-arginine biosynthesis; L-arginine from L-ornithine and carbamoyl phosphate: step 1/3. In terms of biological role, plays an important role in the survival and pathogenicity of P.syringae. Phaseolotoxin is a virulence factor that inhibits the catalysis of the host OTCase. Phaseolotoxin-producing bacteria do not suffer autointoxication because they possess the anabolic OTCase ArgK which can function even in the presence of phaseolotoxin. Reversibly catalyzes the transfer of the carbamoyl group from carbamoyl phosphate (CP) to the N(epsilon) atom of ornithine (ORN) to produce L-citrulline, which is a substrate for argininosuccinate synthetase, the enzyme involved in the final step in arginine biosynthesis. The chain is Ornithine carbamoyltransferase 2, anabolic from Pseudomonas savastanoi pv. phaseolicola (Pseudomonas syringae pv. phaseolicola).